The chain runs to 74 residues: Conotoxin VnMEKL-0222 (74 aa).

Residues 1-19 form the signal peptide; sequence MEKLTILLLVAAVLMSTQA. The propeptide occupies 20–46; sequence LIQEKRPKEKIKFLSKRKSIPESWWEG. 3 disulfides stabilise this stretch: Cys-48–Cys-62, Cys-55–Cys-66, and Cys-61–Cys-71.

The protein belongs to the conotoxin O2 superfamily. In terms of tissue distribution, expressed by the venom duct.

It is found in the secreted. The protein is Conotoxin VnMEKL-0222 of Conus ventricosus (Mediterranean cone).